We begin with the raw amino-acid sequence, 185 residues long: MRIRPHSETWLKRPPRPRVPARLRPWLTDPGSLTARIRSRCSLFSVNVLAQRLAVPHPDEAALLGLRRGELAWLREVLLVADGVPVVFARSILPRHDVRGAWILFQGLGSRPLGAALFADPRIGRKPLACACLDRRDARYHRASAAAAPRRLPLALWARRSLFGLRGRTLLVSEVFLPTILELPT.

Positions 75, 113, and 174 each coordinate substrate.

This sequence belongs to the UbiC family.

It localises to the cytoplasm. It catalyses the reaction chorismate = 4-hydroxybenzoate + pyruvate. It functions in the pathway cofactor biosynthesis; ubiquinone biosynthesis. Functionally, removes the pyruvyl group from chorismate, with concomitant aromatization of the ring, to provide 4-hydroxybenzoate (4HB) for the ubiquinone pathway. This Aromatoleum aromaticum (strain DSM 19018 / LMG 30748 / EbN1) (Azoarcus sp. (strain EbN1)) protein is Probable chorismate pyruvate-lyase.